The primary structure comprises 490 residues: MVPVIALVGRPNVGKSTLFNRLTRTRDAIVGDLSGLTRDRQYGEAKWQGRSYILIDTGGISGDEHGMDEKMAEQSLLAIEEADVVLFLVDAKAGFTAADQMIAEHLRKRNKRSHVVANKVDNIDPEMARAEFAPLGMGHAIPIAGAHGRGITQLLEAALSDFPRDDDEPAEGEEEEVVAEGEEAKRIPGPSEKDGIKIAIIGRPNVGKSTLVNRMLGEDRVIVYDQPGTTRDSIYIPFERNDEKYTLIDTAGVRKRGKIHEEVEKFSVVKTLQAIKDANVVIFVMDAREGVVDHDLNLLGFALEAGRALVIAINKWDGMTPSERDFVKVELQRRLFFVDFADIHFISALHGTGVGNLYASVQNSFKSAVTRWPTSRLTQILEDAVSEHQPPMVNSRRIKLRYAHLGGANPPIIVIHGNQIEKVPKSYVRYLENTYRRVLKLVGTPIRIEFKGGENPYEGNKNTLTDRQVNKKRRLMSHNKKASKKRRDKK.

2 consecutive EngA-type G domains span residues 3-166 (PVIA…PRDD) and 196-369 (IKIA…KSAV). GTP-binding positions include 9–16 (GRPNVGKS), 56–60 (DTGGI), and 118–121 (NKVD). Positions 162 to 189 (FPRDDDEPAEGEEEEVVAEGEEAKRIPG) are disordered. The span at 164 to 181 (RDDDEPAEGEEEEVVAEG) shows a compositional bias: acidic residues. GTP-binding positions include 202–209 (GRPNVGKS), 249–253 (DTAGV), and 314–317 (NKWD). The region spanning 370 to 454 (TRWPTSRLTQ…PIRIEFKGGE (85 aa)) is the KH-like domain. Residues 453–490 (GENPYEGNKNTLTDRQVNKKRRLMSHNKKASKKRRDKK) are disordered. The span at 470–490 (NKKRRLMSHNKKASKKRRDKK) shows a compositional bias: basic residues.

It belongs to the TRAFAC class TrmE-Era-EngA-EngB-Septin-like GTPase superfamily. EngA (Der) GTPase family. As to quaternary structure, associates with the 50S ribosomal subunit.

Functionally, GTPase that plays an essential role in the late steps of ribosome biogenesis. This chain is GTPase Der, found in Pseudomonas fluorescens (strain Pf0-1).